The primary structure comprises 376 residues: Thiol-disulfide oxidoreductase LTO1 (376 aa).

Residues 1-45 constitute a chloroplast transit peptide; it reads MMARFVSVSSCQFHFGFREVSPPSVTSYPRRFEVSDRRFPAIPIK. Residues 44 to 77 form a disordered region; the sequence is IKCSSSEPENGEDSAPSLSSSSSSSTSEVSTSNS. At 46–81 the chain is on the stromal side; the sequence is CSSSEPENGEDSAPSLSSSSSSSTSEVSTSNSSTYN. The segment covering 57-77 has biased composition (low complexity); sequence SAPSLSSSSSSSTSEVSTSNS. The helical transmembrane segment at 82-102 threads the bilayer; sequence WYTGIGGIGMLDTAYLTYLKV. At 103–125 the chain is on the lumenal side; that stretch reads TGSDAFCPIGGGTCGDVLNSDYA. Cysteine 109 and cysteine 116 are disulfide-bonded. The helical transmembrane segment at 126 to 146 threads the bilayer; it reads VVFGVPLPVIGFVMYGVVTAL. Topologically, residues 147–165 are stromal; it reads SAELGEGNLPFGISKSNGR. Residues 166–186 form a helical membrane-spanning segment; the sequence is FALFGITTAMASASAYFLYIL. The Lumenal portion of the chain corresponds to 187–192; that stretch reads STKLSG. The chain crosses the membrane as a helical span at residues 193–213; it reads SSCLYCLVSAFLSFSLFFLSV. A disulfide bridge connects residues cysteine 195 and cysteine 198. At 214–223 the chain is on the stromal side; it reads KDVKLQEIQQ. The helical transmembrane segment at 224-244 threads the bilayer; it reads VVGLQICLAIIVVASLTASYS. Residues 245-376 lie on the Lumenal side of the membrane; it reads TAQPIPSRSG…DQANETNQLQ (132 aa). 2 disulfide bridges follow: cysteine 293/cysteine 296 and cysteine 316/cysteine 331.

Belongs to the VKOR family. In terms of assembly, interacts with the PSII subunits PSBO1 and PSBO2. Interacts with TL17, TL20.3, HCF164, PETJ, VDE1, EDA3, FKBP13 and FKBP20-2. In terms of tissue distribution, expressed in cotyledons, rosette leaves, stems, cauline leaves and flowers.

The protein localises to the plastid. The protein resides in the chloroplast thylakoid membrane. Thiol-disulfide oxidoreductase catalyzing disulfide bond formation of chloroplast proteins and involved in redox regulation and photosynthetic electron transport. Required for the assembly of photosystem II (PSII) through the formation of disulfide bond in PSBO, a subunit of the PSII oxygen-evolving complex in the thylakoid lumen. Involved in the formation of disulfide bonds in the lumenal protein FKBP13. In vitro, reduces phylloquinone (vitamin K1) and menaquinone (vitamin K2) to their respective quinol. Cannot reduce phylloquinone epoxide to phylloquinone. Plays an important role in regulating the thylakoid lumen redox. This chain is Thiol-disulfide oxidoreductase LTO1, found in Arabidopsis thaliana (Mouse-ear cress).